A 402-amino-acid chain; its full sequence is Protein lag-2 (402 aa).

The signal sequence occupies residues 1–15 (MIAYFLLLLTCLPVL). The Extracellular portion of the chain corresponds to 16–279 (QARVEVHQEF…TTTTPTTVEI (264 aa)). N-linked (GlcNAc...) asparagine glycosylation is found at N72 and N105. In terms of domain architecture, DSL spans 122-166 (VTCARNYFGNRCENFCDAHLAKAARKRCDAMGRLRCDIGWMGPHC). Intrachain disulfides connect C124–C133, C137–C149, C157–C166, C175–C183, C177–C204, C206–C215, C233–C245, C239–C254, and C256–C265. EGF-like domains lie at 171 to 216 (DPRK…TRCE) and 229 to 266 (RPDA…EFCE). N-linked (GlcNAc...) asparagine glycosylation occurs at N194. Residues 280–306 (TVSTSGYSSAVYITVALFVIFSIIIGC) traverse the membrane as a helical segment. Topologically, residues 307–402 (FKYKFKPMRQ…PPSIPACHYV (96 aa)) are cytoplasmic.

As to quaternary structure, may interact with lin-12 / Notch receptor. In terms of tissue distribution, expressed in the gonad distal tip cell (DTC) of hermaphrodites.

The protein resides in the cell membrane. Functionally, probable ligand for lin-12/Notch and glp-1/Notch receptors and involved in the mediation of Notch signaling. Involved in the lin-12/Notch pathway signaling of cell fate in vulval precursor cells (VPCs) and in the postembryonic mesodermal lineage (M lineage), acting redundantly with dsl-1 and apx-1. Functions in uterine cells to promote basement membrane mobility during tissue remodeling. Required for oocyte growth control, acting redundantly with apx-1, perhaps signaling via the glp-1/Notch pathway. Plays a role in Notch-dependent induction of left-right asymmetry in interneurons and motoneurons. Involved in maintaining the developmentally arrested larval state known as dauer, probably signaling in the glp-1/Notch pathway. Required for normal sleep bout quantity and arousal thresholds during the transition from the last larval stage to adulthood in well-fed animals. In Caenorhabditis elegans, this protein is Protein lag-2.